Consider the following 82-residue polypeptide: ATP synthase subunit c (82 aa).

Helical transmembrane passes span A7–G27 and L57–A77.

The protein belongs to the ATPase C chain family. As to quaternary structure, F-type ATPases have 2 components, F(1) - the catalytic core - and F(0) - the membrane proton channel. F(1) has five subunits: alpha(3), beta(3), gamma(1), delta(1), epsilon(1). F(0) has four main subunits: a(1), b(1), b'(1) and c(10-14). The alpha and beta chains form an alternating ring which encloses part of the gamma chain. F(1) is attached to F(0) by a central stalk formed by the gamma and epsilon chains, while a peripheral stalk is formed by the delta, b and b' chains.

Its subcellular location is the cellular thylakoid membrane. Functionally, f(1)F(0) ATP synthase produces ATP from ADP in the presence of a proton or sodium gradient. F-type ATPases consist of two structural domains, F(1) containing the extramembraneous catalytic core and F(0) containing the membrane proton channel, linked together by a central stalk and a peripheral stalk. During catalysis, ATP synthesis in the catalytic domain of F(1) is coupled via a rotary mechanism of the central stalk subunits to proton translocation. In terms of biological role, key component of the F(0) channel; it plays a direct role in translocation across the membrane. A homomeric c-ring of between 10-14 subunits forms the central stalk rotor element with the F(1) delta and epsilon subunits. The protein is ATP synthase subunit c of Synechococcus sp. (strain WH7803).